The primary structure comprises 273 residues: 4-hydroxy-tetrahydrodipicolinate reductase (273 aa).

Residues 12–17 (GAGGRM) and E38 each bind NAD(+). R39 provides a ligand contact to NADP(+). NAD(+) contacts are provided by residues 102–104 (GTT) and 126–129 (AANF). H159 acts as the Proton donor/acceptor in catalysis. A (S)-2,3,4,5-tetrahydrodipicolinate-binding site is contributed by H160. K163 acts as the Proton donor in catalysis. Position 169–170 (169–170 (GT)) interacts with (S)-2,3,4,5-tetrahydrodipicolinate.

Belongs to the DapB family. Homotetramer.

It is found in the cytoplasm. It catalyses the reaction (S)-2,3,4,5-tetrahydrodipicolinate + NAD(+) + H2O = (2S,4S)-4-hydroxy-2,3,4,5-tetrahydrodipicolinate + NADH + H(+). The catalysed reaction is (S)-2,3,4,5-tetrahydrodipicolinate + NADP(+) + H2O = (2S,4S)-4-hydroxy-2,3,4,5-tetrahydrodipicolinate + NADPH + H(+). It functions in the pathway amino-acid biosynthesis; L-lysine biosynthesis via DAP pathway; (S)-tetrahydrodipicolinate from L-aspartate: step 4/4. In terms of biological role, catalyzes the conversion of 4-hydroxy-tetrahydrodipicolinate (HTPA) to tetrahydrodipicolinate. This Shigella sonnei (strain Ss046) protein is 4-hydroxy-tetrahydrodipicolinate reductase.